The chain runs to 514 residues: 3-octaprenyl-4-hydroxybenzoate carboxy-lyase (514 aa).

Position 177 (Asn177) interacts with Mn(2+). Prenylated FMN-binding positions include 180–182, 194–196, and 199–200; these read IYR, RWL, and RG. Residue Glu243 participates in Mn(2+) binding. Asp314 (proton donor) is an active-site residue.

The protein belongs to the UbiD family. In terms of assembly, homohexamer. It depends on prenylated FMN as a cofactor. The cofactor is Mn(2+).

It localises to the cell membrane. It catalyses the reaction a 4-hydroxy-3-(all-trans-polyprenyl)benzoate + H(+) = a 2-(all-trans-polyprenyl)phenol + CO2. It participates in cofactor biosynthesis; ubiquinone biosynthesis. Its function is as follows. Catalyzes the decarboxylation of 3-octaprenyl-4-hydroxy benzoate to 2-octaprenylphenol, an intermediate step in ubiquinone biosynthesis. In Bordetella parapertussis (strain 12822 / ATCC BAA-587 / NCTC 13253), this protein is 3-octaprenyl-4-hydroxybenzoate carboxy-lyase.